The following is a 304-amino-acid chain: Signal recognition particle receptor FtsY (304 aa).

Residues 109 to 116 (GVNGVGKT), 191 to 195 (DTAGR), and 255 to 258 (TKLD) each bind GTP.

Belongs to the GTP-binding SRP family. FtsY subfamily. In terms of assembly, part of the signal recognition particle protein translocation system, which is composed of SRP and FtsY. Sensitive to endogenous proteolytic cleavage between residues 18 and 19 and between residues 86 and 87.

It localises to the cell membrane. Its subcellular location is the cytoplasm. The catalysed reaction is GTP + H2O = GDP + phosphate + H(+). Functionally, involved in targeting and insertion of nascent membrane proteins into the cytoplasmic membrane. Acts as a receptor for the complex formed by the signal recognition particle (SRP) and the ribosome-nascent chain (RNC). The chain is Signal recognition particle receptor FtsY from Thermus aquaticus.